Here is a 253-residue protein sequence, read N- to C-terminus: Hydroxyacylglutathione hydrolase (253 aa).

Residues H54, H56, D58, H59, H112, D131, and H169 each contribute to the Zn(2+) site.

This sequence belongs to the metallo-beta-lactamase superfamily. Glyoxalase II family. Monomer. Zn(2+) serves as cofactor.

It carries out the reaction an S-(2-hydroxyacyl)glutathione + H2O = a 2-hydroxy carboxylate + glutathione + H(+). It participates in secondary metabolite metabolism; methylglyoxal degradation; (R)-lactate from methylglyoxal: step 2/2. Thiolesterase that catalyzes the hydrolysis of S-D-lactoyl-glutathione to form glutathione and D-lactic acid. This chain is Hydroxyacylglutathione hydrolase, found in Bartonella henselae (strain ATCC 49882 / DSM 28221 / CCUG 30454 / Houston 1) (Rochalimaea henselae).